A 358-amino-acid chain; its full sequence is Phosphate acyltransferase (358 aa).

Residues 336-358 (SAAGAAPASPETAPTPHPSTRAA) are disordered.

This sequence belongs to the PlsX family. Homodimer. Probably interacts with PlsY.

It localises to the cytoplasm. It carries out the reaction a fatty acyl-[ACP] + phosphate = an acyl phosphate + holo-[ACP]. Its pathway is lipid metabolism; phospholipid metabolism. In terms of biological role, catalyzes the reversible formation of acyl-phosphate (acyl-PO(4)) from acyl-[acyl-carrier-protein] (acyl-ACP). This enzyme utilizes acyl-ACP as fatty acyl donor, but not acyl-CoA. This chain is Phosphate acyltransferase, found in Cupriavidus pinatubonensis (strain JMP 134 / LMG 1197) (Cupriavidus necator (strain JMP 134)).